A 74-amino-acid chain; its full sequence is Probable protein E5B (74 aa).

The polypeptide is Probable protein E5B (Homo sapiens (Human)).